A 612-amino-acid polypeptide reads, in one-letter code: Lysophospholipase (612 aa).

The signal sequence occupies residues Asp1–Arg9. The PLA2c domain occupies Ser24 to Asn571. Residues Asn41, Asn81, Asn116, Asn150, Asn223, Asn267, Asn306, Asn335, Asn427, Asn440, Asn446, Asn477, Asn498, Asn526, Asn532, Asn567, and Asn571 are each glycosylated (N-linked (GlcNAc...) asparagine).

Belongs to the lysophospholipase family. Post-translationally, N-glycosylated.

The protein resides in the secreted. It carries out the reaction a 1-acyl-sn-glycero-3-phosphocholine + H2O = sn-glycerol 3-phosphocholine + a fatty acid + H(+). Functionally, catalyzes the release of fatty acids from lysophospholipids. The chain is Lysophospholipase from Penicillium chrysogenum (Penicillium notatum).